The primary structure comprises 351 residues: tRNA (guanine(26)-N(2))-dimethyltransferase (351 aa).

The Trm1 methyltransferase domain maps to 4 to 350; it reads VLRREGAVQF…AGYGEVKRAL (347 aa). S-adenosyl-L-methionine-binding residues include Arg-39, Arg-65, Asp-83, Asp-109, and Ala-110.

Belongs to the class I-like SAM-binding methyltransferase superfamily. Trm1 family.

The catalysed reaction is guanosine(26) in tRNA + 2 S-adenosyl-L-methionine = N(2)-dimethylguanosine(26) in tRNA + 2 S-adenosyl-L-homocysteine + 2 H(+). Its function is as follows. Dimethylates a single guanine residue at position 26 of a number of tRNAs using S-adenosyl-L-methionine as donor of the methyl groups. This Pyrobaculum neutrophilum (strain DSM 2338 / JCM 9278 / NBRC 100436 / V24Sta) (Thermoproteus neutrophilus) protein is tRNA (guanine(26)-N(2))-dimethyltransferase.